We begin with the raw amino-acid sequence, 318 residues long: Transaldolase (318 aa).

The Schiff-base intermediate with substrate role is filled by K132.

The protein belongs to the transaldolase family. Type 1 subfamily. Homodimer.

It localises to the cytoplasm. The catalysed reaction is D-sedoheptulose 7-phosphate + D-glyceraldehyde 3-phosphate = D-erythrose 4-phosphate + beta-D-fructose 6-phosphate. It functions in the pathway carbohydrate degradation; pentose phosphate pathway; D-glyceraldehyde 3-phosphate and beta-D-fructose 6-phosphate from D-ribose 5-phosphate and D-xylulose 5-phosphate (non-oxidative stage): step 2/3. In terms of biological role, transaldolase is important for the balance of metabolites in the pentose-phosphate pathway. This chain is Transaldolase, found in Shewanella sediminis (strain HAW-EB3).